Reading from the N-terminus, the 62-residue chain is Large ribosomal subunit protein uL30 (62 aa).

This sequence belongs to the universal ribosomal protein uL30 family. Part of the 50S ribosomal subunit.

The protein is Large ribosomal subunit protein uL30 of Dinoroseobacter shibae (strain DSM 16493 / NCIMB 14021 / DFL 12).